We begin with the raw amino-acid sequence, 115 residues long: SOSS complex subunit C homolog (115 aa).

Belongs to the SOSS-C family.

This is SOSS complex subunit C homolog from Drosophila grimshawi (Hawaiian fruit fly).